The following is a 365-amino-acid chain: Pyridoxal reductase, chloroplastic (365 aa).

A chloroplast-targeting transit peptide spans 1 to 15; sequence MALTLSTTKTFTNIN. Tyrosine 94 acts as the Proton donor in catalysis.

Belongs to the aldo/keto reductase family. In terms of assembly, monomer. As to expression, expressed in cotyledons, embryos, flowers, shoots, roots and seeds.

It is found in the plastid. Its subcellular location is the chloroplast. It carries out the reaction pyridoxine + NADP(+) = pyridoxal + NADPH + H(+). Its pathway is cofactor degradation; B6 vitamer degradation; pyridoxal from pyridoxine (dehydrogenase route): step 1/1. Its function is as follows. Catalyzes the reduction of pyridoxal (PL) with NADPH and oxidation of pyridoxine (PN) with NADP(+). Involved in the PLP salvage pathway. The protein is Pyridoxal reductase, chloroplastic (PLR1) of Arabidopsis thaliana (Mouse-ear cress).